The following is a 160-amino-acid chain: pH-gated potassium channel KcsA (160 aa).

The Cytoplasmic portion of the chain corresponds to 1-27; that stretch reads MPPMLSGLLARLVKLLLGRHGSALHWR. The chain crosses the membrane as a helical span at residues 28-50; it reads AAGAATVLLVIVLLAGSYLAVLA. Topologically, residues 51–61 are extracellular; the sequence is ERGAPGAQLIT. The segment at residues 62–72 is an intramembrane region (helical; Pore-forming); the sequence is YPRALWWSVET. The pore-forming intramembrane region spans 73-80; that stretch reads ATTVGYGD. The Selectivity filter signature appears at 75 to 80; that stretch reads TVGYGD. Topologically, residues 81–87 are extracellular; sequence LYPVTLW. A helical transmembrane segment spans residues 88-111; it reads GRLVAVVVMVAGITSFGLVTAALA. Over 112–160 the chain is Cytoplasmic; sequence TWFVGREQERRGHFVRHSEKAAEEAYTRTTRALHERFDRLERMLDDNRR.

It belongs to the potassium channel family. Homotetramer.

It is found in the cell membrane. In terms of biological role, acts as a pH-gated potassium ion channel; changing the cytosolic pH from 7 to 4 opens the channel. The protein is pH-gated potassium channel KcsA (kcsA) of Streptomyces coelicolor (strain ATCC BAA-471 / A3(2) / M145).